The primary structure comprises 186 residues: Putative manganese efflux pump MntP (186 aa).

Helical transmembrane passes span Met1 to Ser21, Val41 to Val61, Trp71 to Gly91, Leu105 to Phe125, Ile130 to Val150, and Ile165 to Trp185.

This sequence belongs to the MntP (TC 9.B.29) family.

It is found in the cell membrane. In terms of biological role, probably functions as a manganese efflux pump. This Methanosarcina barkeri (strain Fusaro / DSM 804) protein is Putative manganese efflux pump MntP.